We begin with the raw amino-acid sequence, 496 residues long: Transcription termination/antitermination protein NusA (496 aa).

Positions 135–200 (GQIITGIVKK…RGAQLFISRS (66 aa)) constitute an S1 motif domain. Positions 302-370 (CHTMDIAVDI…KNLNINENII (69 aa)) constitute a KH domain. A run of 2 repeats spans residues 364–414 (NINE…KSKL) and 440–490 (GMNA…RNIC). The interval 364–490 (NINENIIKIL…LLIMTARNIC (127 aa)) is 2 X 51 AA approximate repeats.

The protein belongs to the NusA family. Monomer. Binds directly to the core enzyme of the DNA-dependent RNA polymerase and to nascent RNA.

The protein resides in the cytoplasm. Participates in both transcription termination and antitermination. This chain is Transcription termination/antitermination protein NusA, found in Buchnera aphidicola subsp. Acyrthosiphon pisum (strain APS) (Acyrthosiphon pisum symbiotic bacterium).